A 398-amino-acid polypeptide reads, in one-letter code: NADH-quinone oxidoreductase subunit D (398 aa).

This sequence belongs to the complex I 49 kDa subunit family. In terms of assembly, NDH-1 is composed of 14 different subunits. Subunits NuoB, C, D, E, F, and G constitute the peripheral sector of the complex.

The protein resides in the cell inner membrane. It catalyses the reaction a quinone + NADH + 5 H(+)(in) = a quinol + NAD(+) + 4 H(+)(out). NDH-1 shuttles electrons from NADH, via FMN and iron-sulfur (Fe-S) centers, to quinones in the respiratory chain. The immediate electron acceptor for the enzyme in this species is believed to be ubiquinone. Couples the redox reaction to proton translocation (for every two electrons transferred, four hydrogen ions are translocated across the cytoplasmic membrane), and thus conserves the redox energy in a proton gradient. The polypeptide is NADH-quinone oxidoreductase subunit D (Bradyrhizobium sp. (strain ORS 278)).